The following is an 876-amino-acid chain: Valine--tRNA ligase (876 aa).

A 'HIGH' region motif is present at residues 44–54 (PNVTGKLHLGH). A 'KMSKS' region motif is present at residues 520-524 (KMSKS). K523 contributes to the ATP binding site. The stretch at 805–876 (LEGLIDMDKE…VKARIEQLKA (72 aa)) forms a coiled coil.

The protein belongs to the class-I aminoacyl-tRNA synthetase family. ValS type 1 subfamily. In terms of assembly, monomer.

Its subcellular location is the cytoplasm. The enzyme catalyses tRNA(Val) + L-valine + ATP = L-valyl-tRNA(Val) + AMP + diphosphate. Functionally, catalyzes the attachment of valine to tRNA(Val). As ValRS can inadvertently accommodate and process structurally similar amino acids such as threonine, to avoid such errors, it has a 'posttransfer' editing activity that hydrolyzes mischarged Thr-tRNA(Val) in a tRNA-dependent manner. The chain is Valine--tRNA ligase from Staphylococcus aureus (strain bovine RF122 / ET3-1).